The sequence spans 156 residues: 6,7-dimethyl-8-ribityllumazine synthase (156 aa).

Residues F22, 57–59 (AYE), and 81–83 (TVI) each bind 5-amino-6-(D-ribitylamino)uracil. 86 to 87 (GT) contributes to the (2S)-2-hydroxy-3-oxobutyl phosphate binding site. H89 (proton donor) is an active-site residue. F114 serves as a coordination point for 5-amino-6-(D-ribitylamino)uracil. (2S)-2-hydroxy-3-oxobutyl phosphate is bound at residue R128.

It belongs to the DMRL synthase family. As to quaternary structure, forms an icosahedral capsid composed of 60 subunits, arranged as a dodecamer of pentamers.

It carries out the reaction (2S)-2-hydroxy-3-oxobutyl phosphate + 5-amino-6-(D-ribitylamino)uracil = 6,7-dimethyl-8-(1-D-ribityl)lumazine + phosphate + 2 H2O + H(+). The protein operates within cofactor biosynthesis; riboflavin biosynthesis; riboflavin from 2-hydroxy-3-oxobutyl phosphate and 5-amino-6-(D-ribitylamino)uracil: step 1/2. In terms of biological role, catalyzes the formation of 6,7-dimethyl-8-ribityllumazine by condensation of 5-amino-6-(D-ribitylamino)uracil with 3,4-dihydroxy-2-butanone 4-phosphate. This is the penultimate step in the biosynthesis of riboflavin. This chain is 6,7-dimethyl-8-ribityllumazine synthase, found in Salmonella agona (strain SL483).